The sequence spans 809 residues: Putative zinc metalloprotease TRE2 (809 aa).

2 stretches are compositionally biased toward polar residues: residues Met1–Asn12 and Pro20–Met30. The interval Met1–Pro66 is disordered. At Met1 to Arg125 the chain is on the cytoplasmic side. The span at Ser37–Ile50 shows a compositional bias: low complexity. A helical; Signal-anchor for type II membrane protein membrane pass occupies residues Phe126–Phe146. The Extracellular segment spans residues Asn147–Lys809. N-linked (GlcNAc...) asparagine glycosylation occurs at Asn228. Positions Ser255 to Trp349 constitute a PA domain. Asn669 and Asn736 each carry an N-linked (GlcNAc...) asparagine glycan.

This sequence belongs to the peptidase M28 family. M28B subfamily.

The protein localises to the membrane. The polypeptide is Putative zinc metalloprotease TRE2 (TRE2) (Saccharomyces cerevisiae (strain ATCC 204508 / S288c) (Baker's yeast)).